Reading from the N-terminus, the 344-residue chain is Lipase chaperone (344 aa).

A helical membrane pass occupies residues 14–34; sequence AVVYGVVGLAAIAGVAMWSGA. Residues 39-78 are disordered; the sequence is ATGASGESPEASVAGGSVTAPPQAAVPASTGLPPSLAGSS.

This sequence belongs to the lipase chaperone family.

Its subcellular location is the cell inner membrane. In terms of biological role, may be involved in the folding of the extracellular lipase during its passage through the periplasm. The protein is Lipase chaperone (lifO) of Pseudomonas sp. (strain KWI-56).